Consider the following 235-residue polypeptide: Putative N-acetylmannosamine-6-phosphate 2-epimerase (235 aa).

Belongs to the NanE family.

The enzyme catalyses an N-acyl-D-glucosamine 6-phosphate = an N-acyl-D-mannosamine 6-phosphate. The protein operates within amino-sugar metabolism; N-acetylneuraminate degradation; D-fructose 6-phosphate from N-acetylneuraminate: step 3/5. Converts N-acetylmannosamine-6-phosphate (ManNAc-6-P) to N-acetylglucosamine-6-phosphate (GlcNAc-6-P). The polypeptide is Putative N-acetylmannosamine-6-phosphate 2-epimerase (Aliivibrio fischeri (strain ATCC 700601 / ES114) (Vibrio fischeri)).